The sequence spans 468 residues: Alpha-2A adrenergic receptor (468 aa).

The Extracellular segment spans residues 1–48 (MFRQEQPLAEGSFAPMGSLQPDAGNASWNGTEAPGGGARATPYSLQVT). Residues asparagine 25 and asparagine 29 are each glycosylated (N-linked (GlcNAc...) asparagine). The helical transmembrane segment at 49-74 (LTLVCLAGLLMLFTVFGNVLVIIAVF) threads the bilayer. The Cytoplasmic segment spans residues 75 to 85 (TSRALKAPQNL). The chain crosses the membrane as a helical span at residues 86-111 (FLVSLASADILVATLVIPFSLANEVM). Residues 112–121 (GYWYFGKAWC) lie on the Extracellular side of the membrane. A disulfide bond links cysteine 121 and cysteine 203. A helical transmembrane segment spans residues 122–144 (EIYLALDVLFCTSSIVHLCAISL). At 145–164 (DRYWSITQAIEYNLKRTPRR) the chain is on the cytoplasmic side. The helical transmembrane segment at 165–188 (IKAIIVTVWVISAVISFPPLISFE) threads the bilayer. At 189 to 207 (KKRGRSGQPSAEPRCEIND) the chain is on the extracellular side. The helical transmembrane segment at 208-232 (QKWYVISSSIGSFFAPCLIMILVYV) threads the bilayer. The Cytoplasmic segment spans residues 233-392 (RIYQIAKRRT…RQNREKRFTF (160 aa)). Disordered stretches follow at residues 242 to 279 (TRVP…VGPV) and 291 to 381 (NGAP…SRWR). Positions 315 to 332 (SSEHAERPPGSRRSERGP) are enriched in basic and acidic residues. Position 348 is a phosphoserine (serine 348). Low complexity predominate over residues 351-366 (RRGPGATGLGAPTAGP). Arginine 370 carries the omega-N-methylarginine modification. A helical transmembrane segment spans residues 393–417 (VLAVVIGVFVVCWFPFFFTYTLTAI). Residues 418 to 427 (GCPVPPTLFK) lie on the Extracellular side of the membrane. Residues 428 to 448 (FFFWFGYCNSSLNPVIYTIFN) traverse the membrane as a helical segment. Over 449–468 (HDFRRAFKKILCRGDRKRIV) the chain is Cytoplasmic. Residue cysteine 460 is the site of S-palmitoyl cysteine attachment.

Belongs to the G-protein coupled receptor 1 family. Adrenergic receptor subfamily. ADRA2A sub-subfamily. In terms of assembly, component of the ADA2A-containing complex (ATAC), composed of KAT14, KAT2A, TADA2L, TADA3L, ZZ3, MBIP, WDR5, YEATS2, CCDC101 and DR1. In terms of tissue distribution, retina, brain and olfactory lobe.

It localises to the cell membrane. Its function is as follows. Alpha-2 adrenergic receptors mediate the catecholamine-induced inhibition of adenylate cyclase through the action of G proteins. Component of the ATAC complex, a complex with histone acetyltransferase activity on histones H3 and H4. The protein is Alpha-2A adrenergic receptor of Bos taurus (Bovine).